Consider the following 303-residue polypeptide: MSFTVAVKEEILGQHHLSRHELSAIIKMSGSIGLSTSGLTLSVVTENAKLARHLYESFLHFYEIKSEIRHHQRSNLRKNRVYTVFTDEKVQDLLSDLHLADSFFGLETGIDEAILSDEEAGRAYLCGAFLANGSIRDPESGKYQLEISSVYLDHAQGIASLLQQFLLDAKVLERKKGAVTYLQRAEDIMDFLIVIGAMQARDDFERVKILRETRNDLNRANNAETANIARTVSASMKTINNISKIKDIMGLENLPVDLQEVAQLRIQHPDYSIQQLADSLSTPLTKSGVNHRLRKINKIADEL.

The segment at residues 272–303 (SIQQLADSLSTPLTKSGVNHRLRKINKIADEL) is a DNA-binding region (H-T-H motif).

The protein belongs to the WhiA family.

Its function is as follows. Involved in cell division and chromosome segregation. In Streptococcus pneumoniae (strain ATCC 700669 / Spain 23F-1), this protein is Probable cell division protein WhiA.